Reading from the N-terminus, the 59-residue chain is Putative movement protein p6.6 (59 aa).

A helical membrane pass occupies residues 13–35 (RVGPLLVLCLLLLLILFSRSWNV).

It is found in the membrane. Its function is as follows. Cell-to-cell movement. The chain is Putative movement protein p6.6 from Panicum mosaic virus (strain United States/Kansas 109S) (PMV).